The primary structure comprises 260 residues: MLYLLLSIEYDGYDYSGWVKQKNARTIQGELEKAFFGICHQKIWTLGASKTDAGVHACDQKVLVKLTFQPRHLAFFIKTVSQTLPPNINIKGYQFVAENFSVRTVKVKEYVYTINDQEYDLFNHRYELKVNAPLNVKKLHQISQIFVGTHDFAYFAGVKPTEDIATVHTINKIWVKRNKAKKIEIHFRGKIFIRYQIRMLTQNILACYAGKVSLTELQAQLNCPPKGTTTKYCAKPYGLCLKKIKYLYTVKLNYKKLIIL.

Residue Asp52 is the Nucleophile of the active site. Tyr110 is a substrate binding site.

The protein belongs to the tRNA pseudouridine synthase TruA family. As to quaternary structure, homodimer.

The enzyme catalyses uridine(38/39/40) in tRNA = pseudouridine(38/39/40) in tRNA. In terms of biological role, formation of pseudouridine at positions 38, 39 and 40 in the anticodon stem and loop of transfer RNAs. This chain is tRNA pseudouridine synthase A, found in Spiroplasma kunkelii.